We begin with the raw amino-acid sequence, 337 residues long: Pyridoxal 5'-phosphate synthase subunit PdxS (337 aa).

D65 lines the D-ribose 5-phosphate pocket. K122 functions as the Schiff-base intermediate with D-ribose 5-phosphate in the catalytic mechanism. G194 lines the D-ribose 5-phosphate pocket. K206 serves as a coordination point for D-glyceraldehyde 3-phosphate. D-ribose 5-phosphate is bound by residues G255 and 276–277 (GS).

The protein belongs to the PdxS/SNZ family. In the presence of PdxT, forms a dodecamer of heterodimers.

The catalysed reaction is aldehydo-D-ribose 5-phosphate + D-glyceraldehyde 3-phosphate + L-glutamine = pyridoxal 5'-phosphate + L-glutamate + phosphate + 3 H2O + H(+). It functions in the pathway cofactor biosynthesis; pyridoxal 5'-phosphate biosynthesis. Catalyzes the formation of pyridoxal 5'-phosphate from ribose 5-phosphate (RBP), glyceraldehyde 3-phosphate (G3P) and ammonia. The ammonia is provided by the PdxT subunit. Can also use ribulose 5-phosphate and dihydroxyacetone phosphate as substrates, resulting from enzyme-catalyzed isomerization of RBP and G3P, respectively. This chain is Pyridoxal 5'-phosphate synthase subunit PdxS, found in Metallosphaera sedula (strain ATCC 51363 / DSM 5348 / JCM 9185 / NBRC 15509 / TH2).